The sequence spans 202 residues: Securin (202 aa).

Ala2 carries the post-translational modification N-acetylalanine. A disordered region spans residues 35 to 90 (LDGRSQVSTPRFGKTFDAPPALPKATRKALGTVNRATEKSVKTKGPLKQKQPSFSA). The D-box signature appears at 61-64 (RKAL). 2 consecutive short sequence motifs (TEK-box) follow at residues 71-73 (TEK) and 94-96 (TEK). The short motif at 163–173 (PPSPVKMPSPP) is the SH3-binding element. Residue Ser165 is modified to Phosphoserine; by CDK1.

This sequence belongs to the securin family. Interacts with RPS10 and DNAJA1. Interacts with the caspase-like ESPL1, and prevents its protease activity probably by covering its active site. Interacts with TP53 and blocks its activity probably by blocking its binding to DNA. Interacts with the Ku 70 kDa subunit of ds-DNA kinase. Interacts with PTTG1IP. Phosphorylated at Ser-165 by CDK1 during mitosis. Post-translationally, phosphorylated in vitro by ds-DNA kinase. In terms of processing, ubiquitinated through 'Lys-11' linkage of ubiquitin moieties by the anaphase promoting complex (APC) at the onset of anaphase, conducting to its degradation. 'Lys-11'-linked ubiquitination is mediated by the E2 ligase UBE2C/UBCH10. Expressed at low level in most tissues, except in adult testis, where it is highly expressed. Overexpressed in many patients suffering from pituitary adenomas, primary epithelial neoplasias, and esophageal cancer.

It is found in the cytoplasm. It localises to the nucleus. Its function is as follows. Regulatory protein, which plays a central role in chromosome stability, in the p53/TP53 pathway, and DNA repair. Probably acts by blocking the action of key proteins. During the mitosis, it blocks Separase/ESPL1 function, preventing the proteolysis of the cohesin complex and the subsequent segregation of the chromosomes. At the onset of anaphase, it is ubiquitinated, conducting to its destruction and to the liberation of ESPL1. Its function is however not limited to a blocking activity, since it is required to activate ESPL1. Negatively regulates the transcriptional activity and related apoptosis activity of TP53. The negative regulation of TP53 may explain the strong transforming capability of the protein when it is overexpressed. May also play a role in DNA repair via its interaction with Ku, possibly by connecting DNA damage-response pathways with sister chromatid separation. This is Securin (PTTG1) from Homo sapiens (Human).